The sequence spans 160 residues: Cytochrome b6-f complex subunit 4 (160 aa).

3 consecutive transmembrane segments (helical) span residues 36–56 (LLYI…GLAV), 95–115 (LLGI…PFIE), and 131–151 (AFFL…CLPI).

The protein belongs to the cytochrome b family. PetD subfamily. In terms of assembly, the 4 large subunits of the cytochrome b6-f complex are cytochrome b6, subunit IV (17 kDa polypeptide, PetD), cytochrome f and the Rieske protein, while the 4 small subunits are PetG, PetL, PetM and PetN. The complex functions as a dimer.

The protein localises to the cellular thylakoid membrane. Its function is as follows. Component of the cytochrome b6-f complex, which mediates electron transfer between photosystem II (PSII) and photosystem I (PSI), cyclic electron flow around PSI, and state transitions. The polypeptide is Cytochrome b6-f complex subunit 4 (Prochlorococcus marinus (strain SARG / CCMP1375 / SS120)).